Here is a 608-residue protein sequence, read N- to C-terminus: Glutamine--fructose-6-phosphate aminotransferase [isomerizing] (608 aa).

Cysteine 2 acts as the Nucleophile; for GATase activity in catalysis. In terms of domain architecture, Glutamine amidotransferase type-2 spans 2 to 217; the sequence is CGIVGIVGHK…DGDWAVVGKT (216 aa). SIS domains lie at 283 to 422 and 456 to 598; these read TDID…ARGT and LSRE…VDQP. The For Fru-6P isomerization activity role is filled by lysine 603.

Its subcellular location is the cytoplasm. The catalysed reaction is D-fructose 6-phosphate + L-glutamine = D-glucosamine 6-phosphate + L-glutamate. Its function is as follows. Involved in the production of the root hair deformation (HAD) factor specifically on medicago. The sequence is that of Glutamine--fructose-6-phosphate aminotransferase [isomerizing] (nodM) from Rhizobium leguminosarum bv. viciae.